A 176-amino-acid polypeptide reads, in one-letter code: NADH:riboflavin 5'-phosphate oxidoreductase (176 aa).

In terms of biological role, provides the reduced form of flavin mononucleotide for the PIIA synthase reaction. In Streptomyces pristinaespiralis, this protein is NADH:riboflavin 5'-phosphate oxidoreductase (snaC).